Consider the following 250-residue polypeptide: Proteasome subunit alpha type-7-B (250 aa).

A Glycyl lysine isopeptide (Lys-Gly) (interchain with G-Cter in ubiquitin) cross-link involves residue Lys62.

The protein belongs to the peptidase T1A family. As to quaternary structure, component of the 20S core complex of the 26S proteasome. The 26S proteasome is composed of a core protease (CP), known as the 20S proteasome, capped at one or both ends by the 19S regulatory particle (RP/PA700). The 20S proteasome core is composed of 28 subunits that are arranged in four stacked rings, resulting in a barrel-shaped structure. The two end rings are each formed by seven alpha subunits, and the two central rings are each formed by seven beta subunits. The catalytic chamber with the active sites is on the inside of the barrel.

Its subcellular location is the cytoplasm. It localises to the nucleus. Its function is as follows. The proteasome is a multicatalytic proteinase complex which is characterized by its ability to cleave peptides with Arg, Phe, Tyr, Leu, and Glu adjacent to the leaving group at neutral or slightly basic pH. The proteasome has an ATP-dependent proteolytic activity. This Arabidopsis thaliana (Mouse-ear cress) protein is Proteasome subunit alpha type-7-B (PAD2).